A 256-amino-acid chain; its full sequence is uncharacterized protein (256 aa).

Helical transmembrane passes span 5–25, 30–50, 64–84, and 105–125; these read FIEG…NYLL, ILST…LKVF, VVIF…DPAI, and VGIT…LGII. A disordered region spans residues 198–256; that stretch reads EKTKSLDSISHSSSSSRKSSTELKIPPVETRIVAEIPVPSSVKRRRHRPNKSMGSIKNS. The segment covering 203 to 215 has biased composition (low complexity); the sequence is LDSISHSSSSSRK. Serine 210 and serine 211 each carry phosphoserine.

It localises to the endoplasmic reticulum membrane. The protein localises to the nucleus membrane. This is an uncharacterized protein from Schizosaccharomyces pombe (strain 972 / ATCC 24843) (Fission yeast).